The following is a 354-amino-acid chain: Methionine aminotransferase BCAT4 (354 aa).

The residue at position 198 (Lys-198) is an N6-(pyridoxal phosphate)lysine.

Belongs to the class-IV pyridoxal-phosphate-dependent aminotransferase family. Pyridoxal 5'-phosphate is required as a cofactor. As to expression, mostly expressed in phloem.

Its subcellular location is the cytoplasm. The catalysed reaction is a 2-oxocarboxylate + L-methionine = 4-methylsulfanyl-2-oxobutanoate + an L-alpha-amino acid. In terms of biological role, converts 2-oxo acids to branched-chain amino acids. Shows activity with L-Leu, L-Ile and L-Val as amino donors and alpha-keto-glutarate as an amino acceptor, but no activity for D-isomers of Leu, Ile, Val, Asp, Glu or Ala. Acts on methionine and its derivatives and the corresponding 2-oxo acids. Catalyzes the initial deamination of methionine to 4-methylthio-2-oxobutyrate as well as the transamination of other typical intermediates of the methionine chain elongation pathway. The chain is Methionine aminotransferase BCAT4 (BCAT4) from Arabidopsis thaliana (Mouse-ear cress).